A 359-amino-acid chain; its full sequence is Photosystem II protein D1 1 (359 aa).

3 helical membrane-spanning segments follow: residues Y29–T46, H118–L133, and W142–A156. H118 is a binding site for chlorophyll a. Y126 contributes to the pheophytin a binding site. Residues D170 and E189 each coordinate [CaMn4O5] cluster. A helical transmembrane segment spans residues F197–L218. H198 serves as a coordination point for chlorophyll a. Residues H215 and S264–F265 each bind a quinone. H215 provides a ligand contact to Fe cation. H272 is a binding site for Fe cation. The chain crosses the membrane as a helical span at residues F274–L288. The [CaMn4O5] cluster site is built by H332, E333, D342, and A344. Positions A345 to G359 are excised as a propeptide.

This sequence belongs to the reaction center PufL/M/PsbA/D family. In terms of assembly, PSII is composed of 1 copy each of membrane proteins PsbA, PsbB, PsbC, PsbD, PsbE, PsbF, PsbH, PsbI, PsbJ, PsbK, PsbL, PsbM, PsbT, PsbX, PsbY, PsbZ, Psb30/Ycf12, peripheral proteins PsbO, CyanoQ (PsbQ), PsbU, PsbV and a large number of cofactors. It forms dimeric complexes. The cofactor is The D1/D2 heterodimer binds P680, chlorophylls that are the primary electron donor of PSII, and subsequent electron acceptors. It shares a non-heme iron and each subunit binds pheophytin, quinone, additional chlorophylls, carotenoids and lipids. D1 provides most of the ligands for the Mn4-Ca-O5 cluster of the oxygen-evolving complex (OEC). There is also a Cl(-1) ion associated with D1 and D2, which is required for oxygen evolution. The PSII complex binds additional chlorophylls, carotenoids and specific lipids.. In terms of processing, tyr-161 forms a radical intermediate that is referred to as redox-active TyrZ, YZ or Y-Z. C-terminally processed by CtpA; processing is essential to allow assembly of the oxygen-evolving complex and thus photosynthetic growth.

Its subcellular location is the cellular thylakoid membrane. It catalyses the reaction 2 a plastoquinone + 4 hnu + 2 H2O = 2 a plastoquinol + O2. In terms of biological role, photosystem II (PSII) is a light-driven water:plastoquinone oxidoreductase that uses light energy to abstract electrons from H(2)O, generating O(2) and a proton gradient subsequently used for ATP formation. It consists of a core antenna complex that captures photons, and an electron transfer chain that converts photonic excitation into a charge separation. The D1/D2 (PsbA/PsbD) reaction center heterodimer binds P680, the primary electron donor of PSII as well as several subsequent electron acceptors. The polypeptide is Photosystem II protein D1 1 (Synechococcus sp. (strain WH7803)).